A 632-amino-acid polypeptide reads, in one-letter code: Phospholipid:diacylglycerol acyltransferase (632 aa).

Residues 1–15 (MASSKKSKTHKKKKE) are compositionally biased toward basic residues. The segment at 1 to 47 (MASSKKSKTHKKKKEVKSPIDLPNSKKPTRALSEQPSASETQSVSNK) is disordered. The Cytoplasmic portion of the chain corresponds to 1–56 (MASSKKSKTHKKKKEVKSPIDLPNSKKPTRALSEQPSASETQSVSNKSRKSKFGKR). Residues 32-46 (LSEQPSASETQSVSN) show a composition bias toward polar residues. The helical transmembrane segment at 57-77 (LNFILGAILGICGAFFFAVGD) threads the bilayer. The Lumenal portion of the chain corresponds to 78–632 (DNAVFDPATL…NEINLDKPRN (555 aa)). Substrate is bound at residue Asp-136. Ser-293 functions as the Acyl-ester intermediate in the catalytic mechanism. Met-294 lines the substrate pocket. Active-site charge relay system residues include Asp-535 and His-586.

The protein belongs to the AB hydrolase superfamily. Lipase family.

Its subcellular location is the endoplasmic reticulum membrane. It catalyses the reaction a glycerophospholipid + a 1,2-diacyl-sn-glycerol = a monoacylglycerophospholipid + a triacyl-sn-glycerol. It functions in the pathway glycerolipid metabolism; triacylglycerol biosynthesis. In terms of biological role, catalyzes triacylglycerol (TAG) formation by an acyl-CoA independent pathway. The enzyme specifically transfers acyl groups from the sn-2 position of a phospholipid to diacylglycerol (DAG), thus forming an sn-1-lysophospholipid. Plays a major role in triacylglycerol formation at log phase. Involved in lipid particle synthesis from the endoplasmic reticulum, promoting localized TAG production at discrete ER subdomains. This Schizosaccharomyces pombe (strain 972 / ATCC 24843) (Fission yeast) protein is Phospholipid:diacylglycerol acyltransferase (plh1).